Reading from the N-terminus, the 180-residue chain is Crossover junction endodeoxyribonuclease RuvC (180 aa).

Active-site residues include D7, E66, and D138. Residues D7, E66, and D138 each coordinate Mg(2+).

It belongs to the RuvC family. As to quaternary structure, homodimer which binds Holliday junction (HJ) DNA. The HJ becomes 2-fold symmetrical on binding to RuvC with unstacked arms; it has a different conformation from HJ DNA in complex with RuvA. In the full resolvosome a probable DNA-RuvA(4)-RuvB(12)-RuvC(2) complex forms which resolves the HJ. Mg(2+) is required as a cofactor.

It localises to the cytoplasm. The catalysed reaction is Endonucleolytic cleavage at a junction such as a reciprocal single-stranded crossover between two homologous DNA duplexes (Holliday junction).. Functionally, the RuvA-RuvB-RuvC complex processes Holliday junction (HJ) DNA during genetic recombination and DNA repair. Endonuclease that resolves HJ intermediates. Cleaves cruciform DNA by making single-stranded nicks across the HJ at symmetrical positions within the homologous arms, yielding a 5'-phosphate and a 3'-hydroxyl group; requires a central core of homology in the junction. The consensus cleavage sequence is 5'-(A/T)TT(C/G)-3'. Cleavage occurs on the 3'-side of the TT dinucleotide at the point of strand exchange. HJ branch migration catalyzed by RuvA-RuvB allows RuvC to scan DNA until it finds its consensus sequence, where it cleaves and resolves the cruciform DNA. The sequence is that of Crossover junction endodeoxyribonuclease RuvC from Burkholderia multivorans (strain ATCC 17616 / 249).